We begin with the raw amino-acid sequence, 474 residues long: MKDIVFYNSLTREKEVFKPINANEVGMYSCGPTVYNYAHIGNFRAYIFSDLLRRVLEDYGYNVKLVMNLTDVDDKTIKNSKENHISLNDYTKKYKEAFFEDIKTLGIKKATVNPAATDHIKEMINIIELLKKNGHTYESDGSVYFKISTFPQYGELANLDKQELLDGASGRVLNDEYDKENASDFVLWKAYTEDDGDVYWDSPFGKGRPGWHIECSAMSCKYLGKHFDIHTGGVDNKFPHHENEIAQNEAAFNEKFVNYWLHCEHLIVDGEKMSKSKGNFYTLRDLLDKGLSPEAIRYSLINSHYRKQLNFTIEGIKQSQSAIDRVNDLIFRLKDINNTESNEINENLLKELEVSNEKFSDSIYNDLNISEALGILFTLVKTVNTSFDSINVNTRDAILKFIERVNNIINCFNMGDTDKKSNNEDEDKINKLIEERTIAKKEKNYQKADEIRNQLLSMGIEIMDTPQGVKWKRK.

Cys30 lines the Zn(2+) pocket. The 'HIGH' region signature appears at 32 to 42 (PTVYNYAHIGN). Zn(2+) is bound by residues Cys215, His240, and Glu244. The 'KMSKS' region signature appears at 272-276 (KMSKS). ATP is bound at residue Lys275.

It belongs to the class-I aminoacyl-tRNA synthetase family. Monomer. Zn(2+) is required as a cofactor.

The protein resides in the cytoplasm. It carries out the reaction tRNA(Cys) + L-cysteine + ATP = L-cysteinyl-tRNA(Cys) + AMP + diphosphate. This is Cysteine--tRNA ligase from Brachyspira hyodysenteriae (strain ATCC 49526 / WA1).